Consider the following 181-residue polypeptide: ATP synthase subunit delta (181 aa).

Belongs to the ATPase delta chain family. As to quaternary structure, F-type ATPases have 2 components, F(1) - the catalytic core - and F(0) - the membrane proton channel. F(1) has five subunits: alpha(3), beta(3), gamma(1), delta(1), epsilon(1). F(0) has three main subunits: a(1), b(2) and c(10-14). The alpha and beta chains form an alternating ring which encloses part of the gamma chain. F(1) is attached to F(0) by a central stalk formed by the gamma and epsilon chains, while a peripheral stalk is formed by the delta and b chains.

It localises to the cell membrane. F(1)F(0) ATP synthase produces ATP from ADP in the presence of a proton or sodium gradient. F-type ATPases consist of two structural domains, F(1) containing the extramembraneous catalytic core and F(0) containing the membrane proton channel, linked together by a central stalk and a peripheral stalk. During catalysis, ATP synthesis in the catalytic domain of F(1) is coupled via a rotary mechanism of the central stalk subunits to proton translocation. Its function is as follows. This protein is part of the stalk that links CF(0) to CF(1). It either transmits conformational changes from CF(0) to CF(1) or is implicated in proton conduction. The protein is ATP synthase subunit delta of Bacillus velezensis (strain DSM 23117 / BGSC 10A6 / LMG 26770 / FZB42) (Bacillus amyloliquefaciens subsp. plantarum).